A 333-amino-acid chain; its full sequence is Serine/threonine-protein phosphatase 4 catalytic subunit 1 (333 aa).

The tract at residues 1-29 is disordered; the sequence is MALAVADTQNETFARSESPTSGPSDQLST. Positions 7 to 27 are enriched in polar residues; the sequence is DTQNETFARSESPTSGPSDQL. Positions 79, 81, 107, and 139 each coordinate Mn(2+). H140 functions as the Proton donor in the catalytic mechanism. Mn(2+) is bound by residues H189 and H264. L333 is subject to Leucine methyl ester.

This sequence belongs to the PPP phosphatase family. PP-4 (PP-X) subfamily. As to quaternary structure, serine/threonine-protein phosphatase 4 (PP4) occurs in different assemblies of the catalytic and one or more regulatory subunits. The regulatory subunits are likely to be ppfr-1, ppfr-2, ppfr-4 and smk-1. Interacts with mei-1. The cofactor is Mn(2+). Post-translationally, methylation at the C-terminal Leu-333 is critical for interactions with regulatory subunits.

The protein localises to the cytoplasm. Its subcellular location is the cytoskeleton. The protein resides in the microtubule organizing center. It is found in the centrosome. The catalysed reaction is O-phospho-L-seryl-[protein] + H2O = L-seryl-[protein] + phosphate. The enzyme catalyses O-phospho-L-threonyl-[protein] + H2O = L-threonyl-[protein] + phosphate. In terms of biological role, protein phosphatase which plays an essential role in meiosis and in early embryonic mitosis. During spermatocyte meiosis and the first embryonic mitosis, regulates centrosome maturation, and thus spindle formation, by recruiting some of the components of the pericentriolar material (PCM). During oocyte meiosis I, regulates meiotic chromosome dynamics including synapsis-independent chromosome pairing, restriction of synapsis to homologous chromosomes, programmed DNA double-strand break initiation and crossover formation resulting in chiasma formation. During oocyte meiosis II and probably together with regulatory subunit ppfr-1, may regulate microtubule severing by dephosphorylating and activating mei-1, a component of the katanin microtubule severing complex. The sequence is that of Serine/threonine-protein phosphatase 4 catalytic subunit 1 (pph-4.1) from Caenorhabditis briggsae.